Here is a 440-residue protein sequence, read N- to C-terminus: NK1 transcription factor-related protein 1 (440 aa).

Residues 1–13 (MSTSGPAAPGDVP) show a composition bias toward low complexity. Disordered regions lie at residues 1-82 (MSTS…RPTS), 145-291 (GVAA…PRRA), and 342-387 (KWKK…PMGA). Residues 14-31 (ALPPPPPGPGSGPAPPAP) show a composition bias toward pro residues. Low complexity-rich tracts occupy residues 62–74 (VPAV…AARP) and 145–158 (GVAA…TSAG). Residues 170 to 181 (GYSSGSGRSPTA) show a composition bias toward polar residues. Positions 182–198 (DSEDEAPEDEDEEEAPE) are enriched in acidic residues. The span at 210–222 (GGSGGLGARGSGC) shows a compositional bias: gly residues. The segment covering 237 to 269 (AAPGPRGNSPGAPGPPATATGAGSAGSTPQGAA) has biased composition (low complexity). A DNA-binding region (homeobox) is located at residues 288–347 (PRRARTAFTYEQLVALENKFKATRYLSVCERLNLALSLSLTETQVKIWFQNRRTKWKKQN). The segment covering 356 to 374 (TGGGGGPGPGAGPGAGLPG) has biased composition (gly residues).

Belongs to the NK-1 homeobox family.

It is found in the nucleus. In terms of biological role, may be required for the coordinated crosstalk of factors involved in the maintenance of energy homeostasis, possibly by regulating the transcription of specific factors involved in energy balance. The polypeptide is NK1 transcription factor-related protein 1 (Mus musculus (Mouse)).